A 300-amino-acid chain; its full sequence is Succinate--CoA ligase [ADP-forming] subunit alpha (300 aa).

Residues 17-20 (TGST), lysine 43, and 96-98 (ITE) each bind CoA. Tyrosine 159 contributes to the substrate binding site. Catalysis depends on histidine 247, which acts as the Tele-phosphohistidine intermediate.

It belongs to the succinate/malate CoA ligase alpha subunit family. Heterotetramer of two alpha and two beta subunits.

The catalysed reaction is succinate + ATP + CoA = succinyl-CoA + ADP + phosphate. It carries out the reaction GTP + succinate + CoA = succinyl-CoA + GDP + phosphate. It functions in the pathway carbohydrate metabolism; tricarboxylic acid cycle; succinate from succinyl-CoA (ligase route): step 1/1. Its function is as follows. Succinyl-CoA synthetase functions in the citric acid cycle (TCA), coupling the hydrolysis of succinyl-CoA to the synthesis of either ATP or GTP and thus represents the only step of substrate-level phosphorylation in the TCA. The alpha subunit of the enzyme binds the substrates coenzyme A and phosphate, while succinate binding and nucleotide specificity is provided by the beta subunit. This is Succinate--CoA ligase [ADP-forming] subunit alpha from Bacillus subtilis (strain 168).